Consider the following 332-residue polypeptide: Alanine racemase (332 aa).

The Proton acceptor; specific for D-alanine role is filled by Lys33. Position 33 is an N6-(pyridoxal phosphate)lysine (Lys33). Position 115 (Arg115) interacts with substrate. Catalysis depends on Tyr245, which acts as the Proton acceptor; specific for L-alanine. Residue Met286 participates in substrate binding.

This sequence belongs to the alanine racemase family. Pyridoxal 5'-phosphate serves as cofactor.

The enzyme catalyses L-alanine = D-alanine. Its pathway is amino-acid biosynthesis; D-alanine biosynthesis; D-alanine from L-alanine: step 1/1. Functionally, catalyzes the interconversion of L-alanine and D-alanine. May also act on other amino acids. This is Alanine racemase (alr) from Nitratiruptor sp. (strain SB155-2).